The primary structure comprises 120 residues: Small ribosomal subunit protein uS13 (120 aa).

The tract at residues 96–120 (PCRGQRTRTNARTRKGPRKAIAGKK) is disordered.

The protein belongs to the universal ribosomal protein uS13 family. In terms of assembly, part of the 30S ribosomal subunit. Forms a loose heterodimer with protein S19. Forms two bridges to the 50S subunit in the 70S ribosome.

Functionally, located at the top of the head of the 30S subunit, it contacts several helices of the 16S rRNA. In the 70S ribosome it contacts the 23S rRNA (bridge B1a) and protein L5 of the 50S subunit (bridge B1b), connecting the 2 subunits; these bridges are implicated in subunit movement. Contacts the tRNAs in the A and P-sites. In Chromobacterium violaceum (strain ATCC 12472 / DSM 30191 / JCM 1249 / CCUG 213 / NBRC 12614 / NCIMB 9131 / NCTC 9757 / MK), this protein is Small ribosomal subunit protein uS13.